The following is a 138-amino-acid chain: Ribosome-binding factor A (138 aa).

Residues 117–138 are disordered; that stretch reads ERQNKPAASTEKPPVGSLDADL.

Belongs to the RbfA family. Monomer. Binds 30S ribosomal subunits, but not 50S ribosomal subunits or 70S ribosomes.

The protein resides in the cytoplasm. Functionally, one of several proteins that assist in the late maturation steps of the functional core of the 30S ribosomal subunit. Associates with free 30S ribosomal subunits (but not with 30S subunits that are part of 70S ribosomes or polysomes). Required for efficient processing of 16S rRNA. May interact with the 5'-terminal helix region of 16S rRNA. The chain is Ribosome-binding factor A from Acaryochloris marina (strain MBIC 11017).